A 472-amino-acid polypeptide reads, in one-letter code: Methylenetetrahydrofolate--tRNA-(uracil-5-)-methyltransferase TrmFO (472 aa).

Residue 15–20 (GGGLAG) participates in FAD binding.

Belongs to the MnmG family. TrmFO subfamily. FAD is required as a cofactor.

It localises to the cytoplasm. It carries out the reaction uridine(54) in tRNA + (6R)-5,10-methylene-5,6,7,8-tetrahydrofolate + NADH + H(+) = 5-methyluridine(54) in tRNA + (6S)-5,6,7,8-tetrahydrofolate + NAD(+). The catalysed reaction is uridine(54) in tRNA + (6R)-5,10-methylene-5,6,7,8-tetrahydrofolate + NADPH + H(+) = 5-methyluridine(54) in tRNA + (6S)-5,6,7,8-tetrahydrofolate + NADP(+). Catalyzes the folate-dependent formation of 5-methyl-uridine at position 54 (M-5-U54) in all tRNAs. The polypeptide is Methylenetetrahydrofolate--tRNA-(uracil-5-)-methyltransferase TrmFO (Rhizobium meliloti (strain 1021) (Ensifer meliloti)).